The primary structure comprises 351 residues: Uroporphyrinogen decarboxylase (351 aa).

Residues 25-29 (RQAGR), D74, Y151, S206, and H325 each bind substrate.

Belongs to the uroporphyrinogen decarboxylase family. In terms of assembly, homodimer.

Its subcellular location is the cytoplasm. It carries out the reaction uroporphyrinogen III + 4 H(+) = coproporphyrinogen III + 4 CO2. It functions in the pathway porphyrin-containing compound metabolism; protoporphyrin-IX biosynthesis; coproporphyrinogen-III from 5-aminolevulinate: step 4/4. In terms of biological role, catalyzes the decarboxylation of four acetate groups of uroporphyrinogen-III to yield coproporphyrinogen-III. This is Uroporphyrinogen decarboxylase from Chlorobium phaeovibrioides (strain DSM 265 / 1930) (Prosthecochloris vibrioformis (strain DSM 265)).